Reading from the N-terminus, the 1088-residue chain is ATP-dependent helicase/deoxyribonuclease subunit B (1088 aa).

This sequence belongs to the helicase family. AddB/RexB type 2 subfamily. In terms of assembly, heterodimer of AddA and RexB. It depends on Mg(2+) as a cofactor.

Functionally, the heterodimer acts as both an ATP-dependent DNA helicase and an ATP-dependent, dual-direction single-stranded exonuclease. Recognizes the chi site generating a DNA molecule suitable for the initiation of homologous recombination. This subunit has 5' -&gt; 3' nuclease activity but not helicase activity. The sequence is that of ATP-dependent helicase/deoxyribonuclease subunit B from Streptococcus suis (strain 98HAH33).